The following is a 127-amino-acid chain: Small ribosomal subunit protein uS13 (127 aa).

The segment at 95 to 127 (GLPVHGQRTSTNARTRKGPRRAAVKKKGGAKKK) is disordered. A compositionally biased stretch (basic residues) spans 108–127 (RTRKGPRRAAVKKKGGAKKK).

This sequence belongs to the universal ribosomal protein uS13 family. Part of the 30S ribosomal subunit. Forms a loose heterodimer with protein S19. Forms two bridges to the 50S subunit in the 70S ribosome.

Functionally, located at the top of the head of the 30S subunit, it contacts several helices of the 16S rRNA. In the 70S ribosome it contacts the 23S rRNA (bridge B1a) and protein L5 of the 50S subunit (bridge B1b), connecting the 2 subunits; these bridges are implicated in subunit movement. Contacts the tRNAs in the A and P-sites. The polypeptide is Small ribosomal subunit protein uS13 (Desulfatibacillum aliphaticivorans).